Reading from the N-terminus, the 364-residue chain is UDP-N-acetylglucosamine--N-acetylmuramyl-(pentapeptide) pyrophosphoryl-undecaprenol N-acetylglucosamine transferase (364 aa).

Residues 10-12 (TGG), N124, S195, I250, and Q295 each bind UDP-N-acetyl-alpha-D-glucosamine.

It belongs to the glycosyltransferase 28 family. MurG subfamily.

The protein localises to the cell membrane. It catalyses the reaction Mur2Ac(oyl-L-Ala-gamma-D-Glu-L-Lys-D-Ala-D-Ala)-di-trans,octa-cis-undecaprenyl diphosphate + UDP-N-acetyl-alpha-D-glucosamine = beta-D-GlcNAc-(1-&gt;4)-Mur2Ac(oyl-L-Ala-gamma-D-Glu-L-Lys-D-Ala-D-Ala)-di-trans,octa-cis-undecaprenyl diphosphate + UDP + H(+). The protein operates within cell wall biogenesis; peptidoglycan biosynthesis. Its function is as follows. Cell wall formation. Catalyzes the transfer of a GlcNAc subunit on undecaprenyl-pyrophosphoryl-MurNAc-pentapeptide (lipid intermediate I) to form undecaprenyl-pyrophosphoryl-MurNAc-(pentapeptide)GlcNAc (lipid intermediate II). In Levilactobacillus brevis (strain ATCC 367 / BCRC 12310 / CIP 105137 / JCM 1170 / LMG 11437 / NCIMB 947 / NCTC 947) (Lactobacillus brevis), this protein is UDP-N-acetylglucosamine--N-acetylmuramyl-(pentapeptide) pyrophosphoryl-undecaprenol N-acetylglucosamine transferase.